The sequence spans 181 residues: Adenylate kinase (181 aa).

10–15 (GAGKGT) serves as a coordination point for ATP. The segment at 30–59 (STGDLFRANISQQTPLGREAQKYMDAGDLV) is NMP. AMP contacts are provided by residues Thr-31, Arg-36, 57–59 (DLV), 85–88 (GYPR), and Gln-92. The segment at 126-132 (ARGRNDD) is LID. Arg-127 is a binding site for ATP. Residues Arg-129 and Arg-140 each contribute to the AMP site. An ATP-binding site is contributed by Gly-166.

The protein belongs to the adenylate kinase family. Monomer.

It localises to the cytoplasm. It carries out the reaction AMP + ATP = 2 ADP. It functions in the pathway purine metabolism; AMP biosynthesis via salvage pathway; AMP from ADP: step 1/1. Its function is as follows. Catalyzes the reversible transfer of the terminal phosphate group between ATP and AMP. Plays an important role in cellular energy homeostasis and in adenine nucleotide metabolism. This is Adenylate kinase from Nocardia farcinica (strain IFM 10152).